The primary structure comprises 557 residues: Cytochrome P450 monooxygenase FSL4 (557 aa).

2 helical membrane-spanning segments follow: residues 6–26 (LWLV…IFLL) and 32–52 (IVVC…YWTV). Residues asparagine 127 and asparagine 393 are each glycosylated (N-linked (GlcNAc...) asparagine). Residue cysteine 494 participates in heme binding.

It belongs to the cytochrome P450 family. Requires heme as cofactor.

It is found in the membrane. The protein operates within secondary metabolite biosynthesis. Its function is as follows. Cytochrome P450 monooxygenase; part of the gene cluster that mediates the biosynthesis of fusarielins F, G and H, decaketide compounds with 5 methylations and a decaline core that act as mycoestrogens as they stimulate growth of MCF-7 breast cancer cells. The initial compound in the pathway is produced by the reducing polyketide synthase FSL1. FSL1 lacks an active enoyl reductase (ER) domain and biosynthesis of fusarielins relies on the trans-acting enoyl reductase FSL5, before it is released through hydrolysis catalyzed by the thioesterase FSL2. Fusarielins F, G, and H have a C11=C12 cis double bond and is fully reduced between C10 and C11 and between C12 and C13. FSL3 can be involved in the formation of the C11=C12 cis double bond by moving a hypothetical C10=C11 or C12=C13 trans double bond to form prefusarielin. Prefusarielin is oxygenated at C15 and C16 by FSL4, resulting in fusarielin F, which subsequently is epoxidized into fusarielin G by the same enzyme. The final step in the pathway is a reduction of the carboxylic acid moiety to yield fusarielin H via a still undetermined mechanism. The chain is Cytochrome P450 monooxygenase FSL4 from Gibberella zeae (strain ATCC MYA-4620 / CBS 123657 / FGSC 9075 / NRRL 31084 / PH-1) (Wheat head blight fungus).